Consider the following 170-residue polypeptide: RxLR effector protein PITG_07555 (170 aa).

The N-terminal stretch at 1–17 (MQAYHLLLVCMYISCSA) is a signal peptide. Positions 50–62 (RALRTHNPDREER) match the RxLR-dEER motif.

It belongs to the RxLR effector family.

Its subcellular location is the secreted. It localises to the host cytoplasm. The protein localises to the host nucleus. Effector that enhances P.infestans colonization of Nicotiana benthamiana leaves. In Phytophthora infestans (strain T30-4) (Potato late blight agent), this protein is RxLR effector protein PITG_07555.